Consider the following 192-residue polypeptide: Protein FAM169BP (192 aa).

The interval 121–192 (YQAHPGNSED…PPGKLTRSSP (72 aa)) is disordered. Acidic residues predominate over residues 159-177 (EELEDTKDDPECGVEEEDA).

This sequence belongs to the FAM169 family.

The chain is Protein FAM169BP from Homo sapiens (Human).